Here is an 893-residue protein sequence, read N- to C-terminus: DNA gyrase subunit A (893 aa).

The region spanning 35-501 (LPDVRDGLKP…GLEDLEDEDL (467 aa)) is the Topo IIA-type catalytic domain. Residue Tyr-123 is the O-(5'-phospho-DNA)-tyrosine intermediate of the active site. The GyrA-box signature appears at 528–534 (QNRGGRG). The segment at 810 to 893 (VNEEDDNEEN…ASDNEEDSDE (84 aa)) is disordered. Acidic residues-rich tracts occupy residues 812-821 (EEDDNEENAD) and 852-862 (DAEMESVESPE). Over residues 863-879 (NDDRIDIRQDFMDRVNE) the composition is skewed to basic and acidic residues. The span at 880–893 (DIESASDNEEDSDE) shows a compositional bias: acidic residues.

This sequence belongs to the type II topoisomerase GyrA/ParC subunit family. Heterotetramer, composed of two GyrA and two GyrB chains. In the heterotetramer, GyrA contains the active site tyrosine that forms a transient covalent intermediate with DNA, while GyrB binds cofactors and catalyzes ATP hydrolysis.

It localises to the cytoplasm. The enzyme catalyses ATP-dependent breakage, passage and rejoining of double-stranded DNA.. A type II topoisomerase that negatively supercoils closed circular double-stranded (ds) DNA in an ATP-dependent manner to modulate DNA topology and maintain chromosomes in an underwound state. Negative supercoiling favors strand separation, and DNA replication, transcription, recombination and repair, all of which involve strand separation. Also able to catalyze the interconversion of other topological isomers of dsDNA rings, including catenanes and knotted rings. Type II topoisomerases break and join 2 DNA strands simultaneously in an ATP-dependent manner. This Staphylococcus epidermidis (strain ATCC 12228 / FDA PCI 1200) protein is DNA gyrase subunit A.